A 20-amino-acid chain; its full sequence is Short cationic peptide-4b (20 aa).

Position 20 is a glutamic acid 1-amide (glutamate 20).

As to expression, expressed by the venom gland.

Its subcellular location is the secreted. This chain is Short cationic peptide-4b, found in Cupiennius salei (American wandering spider).